We begin with the raw amino-acid sequence, 826 residues long: Ribonucleases P/MRP protein subunit POP1 (826 aa).

2 disordered regions span residues 1-24 and 49-91; these read MATT…PRKI and NKDF…SGGD. Residues 58–65 carry the Nuclear localization signal motif; that stretch reads KRRRTNSY. Over residues 70–79 the composition is skewed to basic residues; the sequence is AKKRNIKRQK.

In terms of assembly, component of nuclear RNase P and RNase MRP ribonucleoproteins. RNase P consists of a catalytic RNA moiety and different protein chains. Several subunits of RNase P are also part of the RNase MRP complex. RNase MRP consists of a catalytic RNA moiety and several protein subunits.

It is found in the nucleus. It localises to the nucleolus. Component of ribonuclease P, a ribonucleoprotein complex that generates mature tRNA molecules by cleaving their 5'-ends. Also a component of the MRP ribonuclease complex, which cleaves pre-rRNA sequences. Required for rRNA maturation, including 5.8S rRNA processing. The sequence is that of Ribonucleases P/MRP protein subunit POP1 from Arabidopsis thaliana (Mouse-ear cress).